Here is a 186-residue protein sequence, read N- to C-terminus: Casparian strip membrane protein 3 (186 aa).

The Cytoplasmic segment spans residues 1 to 26; it reads MKAGALELGEGSKTSIPRGGVNRGIS. The chain crosses the membrane as a helical span at residues 27 to 47; the sequence is ILDFILRLITIIGTLGSAIAM. Residues 48–74 are Extracellular-facing; the sequence is GTTNETLPFFTQFTQFRAEYDDLPTFT. Asn-51 carries N-linked (GlcNAc...) asparagine glycosylation. A helical membrane pass occupies residues 75-95; the sequence is FFVIANSIVSGYLVLSLPMSI. Residues 96–107 lie on the Cytoplasmic side of the membrane; sequence LHIVRSGARASR. Residues 108 to 128 traverse the membrane as a helical segment; sequence IVLIFFDTAMLALLTAAASAA. Topologically, residues 129-161 are extracellular; it reads SAIVYLAHKGNAQANWFAICQQFKSFCERISGS. Residues 162 to 182 form a helical membrane-spanning segment; sequence LIGSFGGIILFILLVLLSAVA. At 183 to 186 the chain is on the cytoplasmic side; it reads LSRC.

Belongs to the Casparian strip membrane proteins (CASP) family. In terms of assembly, homodimer and heterodimers.

It is found in the cell membrane. In terms of biological role, regulates membrane-cell wall junctions and localized cell wall deposition. Required for establishment of the Casparian strip membrane domain (CSD) and the subsequent formation of Casparian strips, a cell wall modification of the root endodermis that determines an apoplastic barrier between the intraorganismal apoplasm and the extraorganismal apoplasm and prevents lateral diffusion. The chain is Casparian strip membrane protein 3 from Vitis vinifera (Grape).